The sequence spans 369 residues: Chorismate synthase (369 aa).

NADP(+) contacts are provided by R48 and R54. FMN is bound by residues R125–S127, N238–A239, G278, K293–S297, and R319.

This sequence belongs to the chorismate synthase family. As to quaternary structure, homotetramer. It depends on FMNH2 as a cofactor.

The catalysed reaction is 5-O-(1-carboxyvinyl)-3-phosphoshikimate = chorismate + phosphate. It functions in the pathway metabolic intermediate biosynthesis; chorismate biosynthesis; chorismate from D-erythrose 4-phosphate and phosphoenolpyruvate: step 7/7. Catalyzes the anti-1,4-elimination of the C-3 phosphate and the C-6 proR hydrogen from 5-enolpyruvylshikimate-3-phosphate (EPSP) to yield chorismate, which is the branch point compound that serves as the starting substrate for the three terminal pathways of aromatic amino acid biosynthesis. This reaction introduces a second double bond into the aromatic ring system. The protein is Chorismate synthase of Cupriavidus necator (strain ATCC 17699 / DSM 428 / KCTC 22496 / NCIMB 10442 / H16 / Stanier 337) (Ralstonia eutropha).